A 297-amino-acid polypeptide reads, in one-letter code: Diaminopimelate epimerase (297 aa).

The substrate site is built by Asn13, Gln46, and Asn66. Residue Cys76 is the Proton donor of the active site. Substrate contacts are provided by residues 77 to 78, Asn174, Asn207, and 225 to 226; these read GN and ER. The active-site Proton acceptor is the Cys234. Residue 235–236 participates in substrate binding; the sequence is GT.

This sequence belongs to the diaminopimelate epimerase family. Homodimer.

It localises to the cytoplasm. The enzyme catalyses (2S,6S)-2,6-diaminopimelate = meso-2,6-diaminopimelate. Its pathway is amino-acid biosynthesis; L-lysine biosynthesis via DAP pathway; DL-2,6-diaminopimelate from LL-2,6-diaminopimelate: step 1/1. In terms of biological role, catalyzes the stereoinversion of LL-2,6-diaminopimelate (L,L-DAP) to meso-diaminopimelate (meso-DAP), a precursor of L-lysine and an essential component of the bacterial peptidoglycan. The polypeptide is Diaminopimelate epimerase (Leptothrix cholodnii (strain ATCC 51168 / LMG 8142 / SP-6) (Leptothrix discophora (strain SP-6))).